We begin with the raw amino-acid sequence, 69 residues long: uncharacterized protein (69 aa).

A disordered region spans residues 21-42 (MYAANKKSDARRRGKVGKEQWE). Residues 35–69 (KVGKEQWEKEMEQYNIQKAQFEKELKEKKEKELKK) are a coiled coil.

This is an uncharacterized protein from Acheta domesticus (House cricket).